We begin with the raw amino-acid sequence, 534 residues long: C-22 sterol desaturase ERG5B (534 aa).

A helical membrane pass occupies residues 43 to 61 (IAVTIFAVLIAYDQFMYIW). Cys-480 contributes to the heme binding site.

It belongs to the cytochrome P450 family. Heme serves as cofactor.

Its subcellular location is the endoplasmic reticulum membrane. It carries out the reaction 5-dehydroepisterol + NADPH + O2 + H(+) = ergosta-5,7,22,24(28)-tetraen-3beta-ol + NADP(+) + 2 H2O. The protein operates within steroid metabolism; ergosterol biosynthesis. C-22 sterol desaturase; part of the third module of ergosterol biosynthesis pathway that includes the late steps of the pathway. ERG5A and ERG5B convert 5-dehydroepisterol into ergosta-5,7,22,24(28)-tetraen-3beta-ol by forming the C-22(23) double bond in the sterol side chain. The third module or late pathway involves the ergosterol synthesis itself through consecutive reactions that mainly occur in the endoplasmic reticulum (ER) membrane. Firstly, the squalene synthase ERG9 catalyzes the condensation of 2 farnesyl pyrophosphate moieties to form squalene, which is the precursor of all steroids. Squalene synthase is crucial for balancing the incorporation of farnesyl diphosphate (FPP) into sterol and nonsterol isoprene synthesis. Secondly, squalene is converted into lanosterol by the consecutive action of the squalene epoxidase ERG1 and the lanosterol synthase ERG7. Then, the delta(24)-sterol C-methyltransferase ERG6 methylates lanosterol at C-24 to produce eburicol. Eburicol is the substrate of the sterol 14-alpha demethylase encoded by CYP51A, CYP51B and CYP51C, to yield 4,4,24-trimethyl ergosta-8,14,24(28)-trienol. CYP51B encodes the enzyme primarily responsible for sterol 14-alpha-demethylation, and plays an essential role in ascospore formation. CYP51A encodes an additional sterol 14-alpha-demethylase, induced on ergosterol depletion and responsible for the intrinsic variation in azole sensitivity. The third CYP51 isoform, CYP51C, does not encode a sterol 14-alpha-demethylase, but is required for full virulence on host wheat ears. The C-14 reductase ERG24 then reduces the C14=C15 double bond which leads to 4,4-dimethylfecosterol. A sequence of further demethylations at C-4, involving the C-4 demethylation complex containing the C-4 methylsterol oxidases ERG25, the sterol-4-alpha-carboxylate 3-dehydrogenase ERG26 and the 3-keto-steroid reductase ERG27, leads to the production of fecosterol via 4-methylfecosterol. ERG28 has a role as a scaffold to help anchor ERG25, ERG26 and ERG27 to the endoplasmic reticulum. The C-8 sterol isomerase ERG2 then catalyzes the reaction which results in unsaturation at C-7 in the B ring of sterols and thus converts fecosterol to episterol. The sterol-C5-desaturases ERG3A and ERG3BB then catalyze the introduction of a C-5 double bond in the B ring to produce 5-dehydroepisterol. The C-22 sterol desaturases ERG5A and ERG5B further convert 5-dehydroepisterol into ergosta-5,7,22,24(28)-tetraen-3beta-ol by forming the C-22(23) double bond in the sterol side chain. Finally, ergosta-5,7,22,24(28)-tetraen-3beta-ol is substrate of the C-24(28) sterol reductase ERG4 to produce ergosterol. This Gibberella zeae (strain ATCC MYA-4620 / CBS 123657 / FGSC 9075 / NRRL 31084 / PH-1) (Wheat head blight fungus) protein is C-22 sterol desaturase ERG5B.